Here is a 263-residue protein sequence, read N- to C-terminus: Tryptophan synthase alpha chain (263 aa).

Catalysis depends on proton acceptor residues Glu-41 and Asp-52.

The protein belongs to the TrpA family. In terms of assembly, tetramer of two alpha and two beta chains.

It carries out the reaction (1S,2R)-1-C-(indol-3-yl)glycerol 3-phosphate + L-serine = D-glyceraldehyde 3-phosphate + L-tryptophan + H2O. It functions in the pathway amino-acid biosynthesis; L-tryptophan biosynthesis; L-tryptophan from chorismate: step 5/5. Its function is as follows. The alpha subunit is responsible for the aldol cleavage of indoleglycerol phosphate to indole and glyceraldehyde 3-phosphate. This chain is Tryptophan synthase alpha chain, found in Geobacillus sp. (strain WCH70).